The sequence spans 680 residues: UvrABC system protein B (680 aa).

The Helicase ATP-binding domain occupies 27–422; it reads AGALGGVTFQ…GRMAGEHVAE (396 aa). 40 to 47 contributes to the ATP binding site; sequence GATGTGKT. The short motif at 93-116 is the Beta-hairpin element; the sequence is YYDYYQPEAYIPQTDTYIEKSASI. One can recognise a Helicase C-terminal domain in the interval 443 to 609; that stretch reads QVDDLLHEIH…PIVKRLDANS (167 aa). A UVR domain is found at 641 to 676; it reads PELVSQLEIQMRDAAKKLEFEKAAEYRDKIHKLRER.

It belongs to the UvrB family. Forms a heterotetramer with UvrA during the search for lesions. Interacts with UvrC in an incision complex.

The protein resides in the cytoplasm. In terms of biological role, the UvrABC repair system catalyzes the recognition and processing of DNA lesions. A damage recognition complex composed of 2 UvrA and 2 UvrB subunits scans DNA for abnormalities. Upon binding of the UvrA(2)B(2) complex to a putative damaged site, the DNA wraps around one UvrB monomer. DNA wrap is dependent on ATP binding by UvrB and probably causes local melting of the DNA helix, facilitating insertion of UvrB beta-hairpin between the DNA strands. Then UvrB probes one DNA strand for the presence of a lesion. If a lesion is found the UvrA subunits dissociate and the UvrB-DNA preincision complex is formed. This complex is subsequently bound by UvrC and the second UvrB is released. If no lesion is found, the DNA wraps around the other UvrB subunit that will check the other stand for damage. This Gloeobacter violaceus (strain ATCC 29082 / PCC 7421) protein is UvrABC system protein B.